The primary structure comprises 257 residues: Spermidine/putrescine transport system permease protein PotC (257 aa).

The Cytoplasmic segment spans residues 1 to 7 (MSRFFLR). Residues 8–27 (NAFMFVVYAYLYIPIIILVT) traverse the membrane as a helical segment. Over 28–65 (NSFNKDRYGLSWKGFSWNWYERLFNNDTLIQAAIHSVT) the chain is Periplasmic. One can recognise an ABC transmembrane type-1 domain in the interval 60–248 (AIHSVTIAFF…VLSLALVVLS (189 aa)). The chain crosses the membrane as a helical span at residues 66-85 (IAFFAATLATIVGGLTAIAL). The Cytoplasmic segment spans residues 86–100 (YRYRFRGKQAVSGML). A helical transmembrane segment spans residues 101-120 (FIVMMSPDIVMAVSLLALFM). Over 121–128 (VVGISLGF) the chain is Periplasmic. The chain crosses the membrane as a helical span at residues 129-148 (WSLLLAHVTFCLPYVTVTIF). The Cytoplasmic segment spans residues 149–176 (SRLNGFDSRMLEAAKDLGASEVTILRKI). The chain crosses the membrane as a helical span at residues 177 to 196 (ILPLALPAVVSGWLLSFTIS). At 197-231 (LDDVVVSSFVSGVSYEILPLRIFSLVKTGVTPEVN) the chain is on the periplasmic side. The helical transmembrane segment at 232–251 (ALATIMIVLSLALVVLSQLI) threads the bilayer. Residues 252 to 257 (TRKNNH) lie on the Cytoplasmic side of the membrane.

Belongs to the binding-protein-dependent transport system permease family. CysTW subfamily.

The protein localises to the cell inner membrane. Functionally, required for the activity of the bacterial periplasmic transport system of putrescine and spermidine. The chain is Spermidine/putrescine transport system permease protein PotC (potC) from Haemophilus influenzae (strain ATCC 51907 / DSM 11121 / KW20 / Rd).